A 768-amino-acid chain; its full sequence is Vitamin B12-dependent ribonucleoside-diphosphate reductase (768 aa).

Residues 3–97 form the ATP-cone domain; that stretch reads KEVVKRDGTV…LYREKRRAIR (95 aa). Residues Ser234, 249 to 250, Gly278, 432 to 436, and 579 to 583 contribute to the substrate site; these read AC, NPCGE, and PTGTI. An intrachain disulfide couples Cys250 to Cys445. Asn432 (proton acceptor) is an active-site residue. Cys434 functions as the Cysteine radical intermediate in the catalytic mechanism. Catalysis depends on Glu436, which acts as the Proton acceptor.

This sequence belongs to the ribonucleoside diphosphate reductase class-2 family. Monomer. Adenosylcob(III)alamin is required as a cofactor.

The catalysed reaction is a 2'-deoxyribonucleoside 5'-diphosphate + [thioredoxin]-disulfide + H2O = a ribonucleoside 5'-diphosphate + [thioredoxin]-dithiol. Its function is as follows. Provides the precursors necessary for DNA synthesis. Catalyzes the biosynthesis of deoxyribonucleotides from the corresponding ribonucleotides. In Thermoplasma acidophilum (strain ATCC 25905 / DSM 1728 / JCM 9062 / NBRC 15155 / AMRC-C165), this protein is Vitamin B12-dependent ribonucleoside-diphosphate reductase.